Here is a 343-residue protein sequence, read N- to C-terminus: Putative kinase HI_0665 (343 aa).

The active-site Proton acceptor is the aspartate 209.

The protein belongs to the HipA Ser/Thr kinase family.

The sequence is that of Putative kinase HI_0665 from Haemophilus influenzae (strain ATCC 51907 / DSM 11121 / KW20 / Rd).